Reading from the N-terminus, the 300-residue chain is MDAVSGGSATGTGEQVNNLRICRAEYRSISRFVEQLRPTRQCMKTLQTHFTHLPASTLLSIFSQEYQKRMKRSMARHHSPEVLRVYYQRYRDEAETRATEPLLLELANQVDLSPALLARLMLECFLEERNASVPSRQVLNNMLREPYLIPDLVLAKHIEQCTVNDCCYGPLVDCIKHAIGLEHEDTLRDKLRERNLSFLDENQLRVKGYDKTPDIILEVPIAVDGHIVHWIESKASFGDDHSHNTYLNEQFWSYCNRFGPGLVIYWFGFISELDCQRERGILLKDGFPTDISSLCAGPQR.

It is found in the nucleus. Its subcellular location is the cytoplasm. Its function is as follows. May play a role in erythroid cell differentiation. This is CDAN1-interacting nuclease 1 (cdin1) from Danio rerio (Zebrafish).